The sequence spans 1155 residues: RHO1 GDP-GTP exchange protein 1 (1155 aa).

M1 is subject to N-acetylmethionine. The span at 100 to 143 (NSSPQSFTGDQISPTNKKISINDSTRQDKGNSCTTTSSPSQKRS) shows a compositional bias: polar residues. The disordered stretch occupies residues 100–249 (NSSPQSFTGD…HSRSKSSPVS (150 aa)). 2 positions are modified to phosphoserine: S154 and S155. A compositionally biased stretch (low complexity) spans 155–167 (SPSLLSFSKNSGS). A Phosphothreonine modification is found at T180. Positions 190-227 (LHSSFNGKHSSSSTSSLFALESLKTQNRRSSNSSNHSS) are enriched in low complexity. Residues 228–243 (QYRRHTNQHQRHHSRS) show a composition bias toward basic residues. Residue S433 is modified to Phosphoserine. The DH domain occupies 464 to 651 (KRQEAIYELF…KDLMKRIDRA (188 aa)). In terms of domain architecture, CNH spans 842-1137 (TNRVNDVLIC…RMLKSYAKKI (296 aa)).

In terms of biological role, stimulates the exchange of RHO1 GDP-bound form into GTP-bound form. The sequence is that of RHO1 GDP-GTP exchange protein 1 (ROM1) from Saccharomyces cerevisiae (strain ATCC 204508 / S288c) (Baker's yeast).